The chain runs to 79 residues: Protein OPG081 (79 aa).

The Intravirion portion of the chain corresponds to 2–8 (VDAITVL). The chain crosses the membrane as a helical span at residues 9–29 (TAICITVLMLLMVISGTAMIV). At 30-47 (KELNPNDIFTMQSLKFNR) the chain is on the virion surface side. A helical transmembrane segment spans residues 48-68 (TVTIFKYIGLFIYIPGTIILY). Residues 69 to 79 (ATYVKSLLMKN) are Intravirion-facing.

The protein belongs to the orthopoxvirus OPG081 family.

It localises to the virion membrane. In terms of biological role, envelope protein. This is Protein OPG081 (OPG081) from Cynomys gunnisoni (Gunnison's prairie dog).